We begin with the raw amino-acid sequence, 1588 residues long: Paternally-expressed gene 3 protein (1588 aa).

Residues 46–128 form the SCAN box domain; it reads HQRFRNLIYV…TLLENYKEMY (83 aa). Disordered stretches follow at residues 128-231, 265-304, and 317-347; these read YQPE…YQNV, GHSH…RRGI, and KFIK…MSDD. A compositionally biased stretch (acidic residues) spans 129–142; sequence QPEDDNNSDVTSDD. Composition is skewed to basic and acidic residues over residues 143 to 152, 160 to 181, 205 to 224, and 293 to 304; these read DMTRNRRESS, FSDR…DRWS, FEMD…RSQD, and PEAKKSTHRRGI. 3 C2H2-type zinc fingers span residues 452–474, 505–527, and 563–585; these read YVCD…QIMH, FECK…RKIH, and YECR…QKIH. Basic and acidic residues predominate over residues 588 to 607; that stretch reads DDKDNEREHERERERERGET. Residues 588–608 form a disordered region; sequence DDKDNEREHERERERERGETF. The C2H2-type 4 zinc finger occupies 627 to 649; the sequence is YECKVCGETFLHSSSLKEHQKIH. 2 disordered regions span residues 839–889 and 905–929; these read VASK…SKNR and QKSV…SSNV. Residues 868 to 881 show a composition bias toward basic and acidic residues; it reads LNDKRQKIPARENP. The C2H2-type 5 zinc finger occupies 969-991; that stretch reads YECQECGECFAHSSDLTEHQKIH. The interval 1056 to 1104 is disordered; it reads EKSHGEESQGENTDGEETHSEETHGQETIEDPVIQGSDMEDPQKDDPDD. Positions 1071 to 1082 are enriched in basic and acidic residues; it reads EETHSEETHGQE. C2H2-type zinc fingers lie at residues 1107 to 1129, 1163 to 1185, 1225 to 1247, 1282 to 1304, and 1332 to 1354; these read YECE…QKVH, YECP…QRIH, IRCL…MRLH, FECA…VTVH, and YECK…KELH. Positions 1396–1415 are enriched in acidic residues; that stretch reads EPEVEAAEPEVEAAEPEVEA. Positions 1396–1495 are disordered; the sequence is EPEVEAAEPE…GIEDPEEGED (100 aa). 7 tandem repeats follow at residues 1397–1403, 1404–1410, 1411–1417, 1418–1422, 1425–1429, 1432–1436, and 1439–1443. The tract at residues 1397–1417 is 3 X 7 AA repeat of P-E-V-E-A-A-E; it reads PEVEAAEPEVEAAEPEVEAAE. The 4 X 5 AA repeat of P-X-G-E-A stretch occupies residues 1418–1443; the sequence is PNGEAEGPDGEAAEPIGEAGQPNGEA. Composition is skewed to acidic residues over residues 1449–1466 and 1475–1495; these read DADE…ERAE and PEGD…EGED. 2 C2H2-type zinc fingers span residues 1505-1527 and 1564-1586; these read YDCH…LKTH and FKCD…QNTH.

Belongs to the krueppel C2H2-type zinc-finger protein family. As to quaternary structure, homodimer. Interacts with SIAH1A and SIAH2. Interacts with TRAF2. Brain, glial cells, astrocytes, embryo, placenta, testis, ovary and uterus. In the placenta it is found in the layer of villous cytotrophoblast cells while in the ovary it is found in the cells of the ovarian stroma including the thecal layers around the follicles. Expression is highly repressed in glioma cell lines.

It is found in the nucleus. Its subcellular location is the cytoplasm. Its function is as follows. Induces apoptosis in cooperation with SIAH1A. Acts as a mediator between p53/TP53 and BAX in a neuronal death pathway that is activated by DNA damage. Acts synergistically with TRAF2 and inhibits TNF induced apoptosis through activation of NF-kappa-B. Possesses a tumor suppressing activity in glioma cells. The chain is Paternally-expressed gene 3 protein (PEG3) from Homo sapiens (Human).